The primary structure comprises 191 residues: dCTP deaminase, dUMP-forming (191 aa).

DCTP-binding positions include lysine 101 to arginine 106, aspartate 119, threonine 127 to glutamate 129, glutamine 148, tyrosine 162, and glutamine 174. The active-site Proton donor/acceptor is the glutamate 129. Positions asparagine 169–isoleucine 191 are disordered. Residues tyrosine 171–histidine 183 are compositionally biased toward polar residues.

This sequence belongs to the dCTP deaminase family. As to quaternary structure, homotrimer.

The enzyme catalyses dCTP + 2 H2O = dUMP + NH4(+) + diphosphate. The protein operates within pyrimidine metabolism; dUMP biosynthesis; dUMP from dCTP: step 1/1. Bifunctional enzyme that catalyzes both the deamination of dCTP to dUTP and the hydrolysis of dUTP to dUMP without releasing the toxic dUTP intermediate. This is dCTP deaminase, dUMP-forming from Pseudarthrobacter chlorophenolicus (strain ATCC 700700 / DSM 12829 / CIP 107037 / JCM 12360 / KCTC 9906 / NCIMB 13794 / A6) (Arthrobacter chlorophenolicus).